The sequence spans 347 residues: UDP-3-O-acylglucosamine N-acyltransferase (347 aa).

His-248 functions as the Proton acceptor in the catalytic mechanism.

It belongs to the transferase hexapeptide repeat family. LpxD subfamily. Homotrimer.

It catalyses the reaction a UDP-3-O-[(3R)-3-hydroxyacyl]-alpha-D-glucosamine + a (3R)-hydroxyacyl-[ACP] = a UDP-2-N,3-O-bis[(3R)-3-hydroxyacyl]-alpha-D-glucosamine + holo-[ACP] + H(+). It functions in the pathway bacterial outer membrane biogenesis; LPS lipid A biosynthesis. In terms of biological role, catalyzes the N-acylation of UDP-3-O-acylglucosamine using 3-hydroxyacyl-ACP as the acyl donor. Is involved in the biosynthesis of lipid A, a phosphorylated glycolipid that anchors the lipopolysaccharide to the outer membrane of the cell. This is UDP-3-O-acylglucosamine N-acyltransferase from Parasynechococcus marenigrum (strain WH8102).